A 124-amino-acid polypeptide reads, in one-letter code: CRISPR-associated endoribonuclease Cas2 4 (124 aa).

D40 lines the Mg(2+) pocket.

Belongs to the CRISPR-associated endoribonuclease Cas2 protein family. In terms of assembly, homodimer, forms a heterotetramer with a Cas1 homodimer. Requires Mg(2+) as cofactor.

CRISPR (clustered regularly interspaced short palindromic repeat), is an adaptive immune system that provides protection against mobile genetic elements (viruses, transposable elements and conjugative plasmids). CRISPR clusters contain sequences complementary to antecedent mobile elements and target invading nucleic acids. CRISPR clusters are transcribed and processed into CRISPR RNA (crRNA). Functions as a ssRNA-specific endoribonuclease. Involved in the integration of spacer DNA into the CRISPR cassette. This Rhodospirillum rubrum (strain ATCC 11170 / ATH 1.1.1 / DSM 467 / LMG 4362 / NCIMB 8255 / S1) protein is CRISPR-associated endoribonuclease Cas2 4.